The primary structure comprises 150 residues: Small ribosomal subunit protein uS9 (150 aa).

The protein belongs to the universal ribosomal protein uS9 family.

The polypeptide is Small ribosomal subunit protein uS9 (Mycolicibacterium smegmatis (strain ATCC 700084 / mc(2)155) (Mycobacterium smegmatis)).